Reading from the N-terminus, the 242-residue chain is Glucosamine-6-phosphate deaminase (242 aa).

Aspartate 67 functions as the Proton acceptor; for enolization step in the catalytic mechanism. The active-site For ring-opening step is the asparagine 136. Residue histidine 138 is the Proton acceptor; for ring-opening step of the active site. The For ring-opening step role is filled by glutamate 143.

The protein belongs to the glucosamine/galactosamine-6-phosphate isomerase family. NagB subfamily.

The catalysed reaction is alpha-D-glucosamine 6-phosphate + H2O = beta-D-fructose 6-phosphate + NH4(+). The protein operates within amino-sugar metabolism; N-acetylneuraminate degradation; D-fructose 6-phosphate from N-acetylneuraminate: step 5/5. In terms of biological role, catalyzes the reversible isomerization-deamination of glucosamine 6-phosphate (GlcN6P) to form fructose 6-phosphate (Fru6P) and ammonium ion. This Clostridium perfringens (strain ATCC 13124 / DSM 756 / JCM 1290 / NCIMB 6125 / NCTC 8237 / Type A) protein is Glucosamine-6-phosphate deaminase.